Reading from the N-terminus, the 223-residue chain is Methanol utilization control regulatory protein MoxX (223 aa).

Residues 16–133 (QILIVDDHPV…EICAAFTEVA (118 aa)) enclose the Response regulatory domain. Residues 155–220 (PGTSAPRLTG…DLVVKGIRYF (66 aa)) enclose the HTH luxR-type domain. The H-T-H motif DNA-binding region spans 179-198 (YRDIADRACISYKTVSNVSL).

In terms of processing, phosphorylated by MoxY.

Its subcellular location is the cytoplasm. Member of the two-component regulatory system MoxY/MoxX probably involved in the regulation of the methanol dehydrogenase expression. This Paracoccus denitrificans protein is Methanol utilization control regulatory protein MoxX (moxX).